The chain runs to 78 residues: Protein FAM240B (78 aa).

Belongs to the FAM240 family.

The sequence is that of Protein FAM240B from Homo sapiens (Human).